The following is a 743-amino-acid chain: NAD(P)H-quinone oxidoreductase subunit 5, chloroplastic (743 aa).

Transmembrane regions (helical) follow at residues 9-29, 40-60, 89-109, 125-145, 147-167, 185-205, 219-239, 258-278, 280-300, 327-347, 354-374, 396-416, 425-445, 546-566, 607-627, and 721-741; these read WIIP…LLFF, WAFI…DLSI, IDPL…LVLI, FAYM…SNFI, IYIF…FWFT, GDFG…SFEF, NEVN…GPVA, TPIS…FLVA, LLPL…IGII, LGYM…FHLI, ALLF…VGYF, TAFL…CFWS, WLYS…TAFY, ILFV…IGIP, LSVS…KPFY, and FYLL…FFFF.

It belongs to the complex I subunit 5 family. As to quaternary structure, NDH is composed of at least 16 different subunits, 5 of which are encoded in the nucleus.

It localises to the plastid. It is found in the chloroplast thylakoid membrane. The catalysed reaction is a plastoquinone + NADH + (n+1) H(+)(in) = a plastoquinol + NAD(+) + n H(+)(out). It carries out the reaction a plastoquinone + NADPH + (n+1) H(+)(in) = a plastoquinol + NADP(+) + n H(+)(out). NDH shuttles electrons from NAD(P)H:plastoquinone, via FMN and iron-sulfur (Fe-S) centers, to quinones in the photosynthetic chain and possibly in a chloroplast respiratory chain. The immediate electron acceptor for the enzyme in this species is believed to be plastoquinone. Couples the redox reaction to proton translocation, and thus conserves the redox energy in a proton gradient. The chain is NAD(P)H-quinone oxidoreductase subunit 5, chloroplastic (ndhF) from Citrus sinensis (Sweet orange).